The sequence spans 27 residues: Alpha-benincasin (27 aa).

Its function is as follows. Has weak antifungal activity toward C.comatus and P.piricola but not toward M.arachidicola. Inhibits cell-free translation in rabbit reticulocyte lysate system. The chain is Alpha-benincasin from Benincasa hispida (Wax gourd).